The sequence spans 328 residues: Probable transcription factor At4g00610 (328 aa).

The segment at 31 to 143 (AKNKTLVTPS…ERAKTETETG (113 aa)) is disordered. Residues 35 to 54 (TLVTPSTVKKSSDVASTSKK) are compositionally biased toward polar residues. Acidic residues predominate over residues 84–108 (SEEEEEDEPSSDSESGSESESDTEA). The segment covering 122–143 (NEKRQSEGKPEEERAKTETETG) has biased composition (basic and acidic residues).

This sequence belongs to the GeBP family.

This is Probable transcription factor At4g00610 from Arabidopsis thaliana (Mouse-ear cress).